The primary structure comprises 419 residues: UDP-N-acetylglucosamine 1-carboxyvinyltransferase 2 (419 aa).

24-25 is a phosphoenolpyruvate binding site; it reads KN. Arg94 is a binding site for UDP-N-acetyl-alpha-D-glucosamine. Catalysis depends on Cys118, which acts as the Proton donor. The residue at position 118 (Cys118) is a 2-(S-cysteinyl)pyruvic acid O-phosphothioketal. Residues 123 to 127, Asp307, and Ile329 each bind UDP-N-acetyl-alpha-D-glucosamine; that span reads RPIDQ.

This sequence belongs to the EPSP synthase family. MurA subfamily.

Its subcellular location is the cytoplasm. The catalysed reaction is phosphoenolpyruvate + UDP-N-acetyl-alpha-D-glucosamine = UDP-N-acetyl-3-O-(1-carboxyvinyl)-alpha-D-glucosamine + phosphate. Its pathway is cell wall biogenesis; peptidoglycan biosynthesis. In terms of biological role, cell wall formation. Adds enolpyruvyl to UDP-N-acetylglucosamine. This is UDP-N-acetylglucosamine 1-carboxyvinyltransferase 2 from Staphylococcus aureus (strain bovine RF122 / ET3-1).